A 103-amino-acid chain; its full sequence is Small ribosomal subunit protein uS10 (103 aa).

The protein belongs to the universal ribosomal protein uS10 family. As to quaternary structure, part of the 30S ribosomal subunit.

In terms of biological role, involved in the binding of tRNA to the ribosomes. The polypeptide is Small ribosomal subunit protein uS10 (Burkholderia mallei (strain NCTC 10247)).